Here is a 1648-residue protein sequence, read N- to C-terminus: Pleiotropic ABC efflux transporter of multiple drugs YBT1 (1648 aa).

Residues 28-48 form a helical membrane-spanning segment; it reads NYVPTTLVTISILILLHNFFI. Asn72 carries N-linked (GlcNAc...) asparagine glycosylation. Transmembrane regions (helical) follow at residues 140–160, 175–195, 207–227, and 250–270; these read VVIE…LSIE, PHVL…LNLN, NIWL…ILPF, and LNLV…LPVL. A glycan (N-linked (GlcNAc...) asparagine) is linked at Asn306. A run of 2 helical transmembrane segments spans residues 352–372 and 392–412; these read FLNL…SIFV and MNLA…VAIC. The 314-residue stretch at 361 to 674 folds into the ABC transmembrane type-1 1 domain; the sequence is CFTTISAFSI…ISDMLSYLIQ (314 aa). Asn471 carries an N-linked (GlcNAc...) asparagine glycan. A run of 2 helical transmembrane segments spans residues 501 to 521 and 523 to 543; these read ISEL…LTVS and ILLY…TIII. Residue Asn573 is glycosylated (N-linked (GlcNAc...) asparagine). A run of 2 helical transmembrane segments spans residues 612–632 and 643–662; these read VWCV…GCTF and LTTP…RDPL. The ABC transporter 1 domain occupies 706-947; the sequence is LAFENVTLRW…GLLGEDENMK (242 aa). Residue Asn710 is glycosylated (N-linked (GlcNAc...) asparagine). Residue 741 to 748 coordinates ATP; sequence GATGSGKT. N-linked (GlcNAc...) asparagine glycans are attached at residues Asn784 and Asn798. Residues 1012-1032 traverse the membrane as a helical segment; sequence MYGGWYTIVALASVFTAILCL. Residues 1032 to 1333 enclose the ABC transmembrane type-1 2 domain; the sequence is LQITQAWWIR…LVRQYSELEM (302 aa). Asn1042 is a glycosylation site (N-linked (GlcNAc...) asparagine). Helical transmembrane passes span 1089–1109, 1168–1188, and 1191–1211; these read IAKF…IGSI, IQSV…ISYI, and AFFP…FFYL. Asn1255 is a glycosylation site (N-linked (GlcNAc...) asparagine). A run of 2 helical transmembrane segments spans residues 1282–1302 and 1305–1325; these read LIGA…INNI and GLAG…LWLV. Residues 1372 to 1622 enclose the ABC transporter 2 domain; that stretch reads VEVNNLSLKY…KKSIFYNMCE (251 aa). A glycan (N-linked (GlcNAc...) asparagine) is linked at Asn1376. 1406 to 1413 is a binding site for ATP; sequence GRTGAGKS. 3 N-linked (GlcNAc...) asparagine glycosylation sites follow: Asn1503, Asn1524, and Asn1573.

The protein belongs to the ABC transporter superfamily. ABCC family. Conjugate transporter (TC 3.A.1.208) subfamily.

It is found in the membrane. Its function is as follows. Pleiotropic ABC efflux transporter that might be involved in the resistance to azoles such as fluconazole. The sequence is that of Pleiotropic ABC efflux transporter of multiple drugs YBT1 from Candida glabrata (strain ATCC 2001 / BCRC 20586 / JCM 3761 / NBRC 0622 / NRRL Y-65 / CBS 138) (Yeast).